The following is a 236-amino-acid chain: Giant extracellular hemoglobin linker 2 chain (236 aa).

Residues 66–108 (NGCEPRHFQCGGSAMECISDLLTCDGSPDCANGADEDSDVCHI) form the LDL-receptor class A domain. 3 disulfides stabilise this stretch: cysteine 68-cysteine 82, cysteine 75-cysteine 95, and cysteine 89-cysteine 106.

Disulfide-linked dimer of identical chains. A model is proposed for the subunit structure of the Tylorrhynchus hemoglobin, consisting of 216 polypeptides chains, 192 heme-containing chains, and 24 linker chains.

In terms of biological role, acts as a linker for the assembly of heme-containing chains in the construction of giant hemoglobin. This Tylorrhynchus heterochetus (Japanese palolo worm) protein is Giant extracellular hemoglobin linker 2 chain.